Consider the following 266-residue polypeptide: 2-dehydro-3-deoxy-D-gluconate/2-dehydro-3-deoxy-phosphogluconate aldolase (266 aa).

Substrate is bound by residues 36–37, 123–125, and 151–153; these read ST, YNI, and KDS. The Schiff-base intermediate with substrate role is filled by K151.

It belongs to the DapA family. KDPG aldolase subfamily. As to quaternary structure, homotetramer; dimer of dimers.

It catalyses the reaction 2-dehydro-3-deoxy-6-phospho-D-gluconate = D-glyceraldehyde 3-phosphate + pyruvate. The catalysed reaction is 2-dehydro-3-deoxy-D-gluconate = D-glyceraldehyde + pyruvate. It carries out the reaction 2-dehydro-3-deoxy-6-phospho-D-galactonate = D-glyceraldehyde 3-phosphate + pyruvate. The enzyme catalyses 2-dehydro-3-deoxy-D-galactonate = D-glyceraldehyde + pyruvate. It participates in carbohydrate acid metabolism; 2-dehydro-3-deoxy-D-gluconate degradation; D-glyceraldehyde 3-phosphate and pyruvate from 2-dehydro-3-deoxy-D-gluconate: step 2/2. In terms of biological role, involved in the degradation of glucose via the Entner-Doudoroff pathway. Catalyzes the reversible cleavage of 2-keto-3-deoxy-6-phosphogluconate (KDPG) and 2-keto-3-deoxygluconate (KDG) forming pyruvate and glyceraldehyde 3-phosphate or glyceraldehyde, respectively. It is also able to catalyze the reversible cleavage of 2-keto-3-deoxy-6-phosphogalactonate (KDPGal) and 2-keto-3-deoxygalactonate (KDGal). It is equally active with both D- and L-glyceraldehyde. This Picrophilus torridus (strain ATCC 700027 / DSM 9790 / JCM 10055 / NBRC 100828 / KAW 2/3) protein is 2-dehydro-3-deoxy-D-gluconate/2-dehydro-3-deoxy-phosphogluconate aldolase.